A 536-amino-acid chain; its full sequence is T-complex protein 1 subunit delta (536 aa).

Residues 1-21 (MAAVAAPMASKPRGSKAESFV) form a disordered region.

The protein belongs to the TCP-1 chaperonin family. Heterooligomeric complex of about 850 to 900 kDa that forms two stacked rings, 12 to 16 nm in diameter.

The protein localises to the cytoplasm. Functionally, molecular chaperone; assists the folding of proteins upon ATP hydrolysis. Known to play a role, in vitro, in the folding of actin and tubulin. The chain is T-complex protein 1 subunit delta from Arabidopsis thaliana (Mouse-ear cress).